Consider the following 801-residue polypeptide: Lon protease 2 (801 aa).

The Lon N-terminal domain maps to Leu14 to Leu209. Gly361 to Thr368 provides a ligand contact to ATP. The region spanning Asp597–Lys778 is the Lon proteolytic domain. Active-site residues include Ser684 and Lys727. The segment covering Ala780–Lys791 has biased composition (basic and acidic residues). Positions Ala780–Ala801 are disordered. Basic residues predominate over residues Asp792 to Ala801.

It belongs to the peptidase S16 family. Homohexamer. Organized in a ring with a central cavity.

Its subcellular location is the cytoplasm. It carries out the reaction Hydrolysis of proteins in presence of ATP.. ATP-dependent serine protease that mediates the selective degradation of mutant and abnormal proteins as well as certain short-lived regulatory proteins. Required for cellular homeostasis and for survival from DNA damage and developmental changes induced by stress. Degrades polypeptides processively to yield small peptide fragments that are 5 to 10 amino acids long. Binds to DNA in a double-stranded, site-specific manner. The polypeptide is Lon protease 2 (Bdellovibrio bacteriovorus (strain ATCC 15356 / DSM 50701 / NCIMB 9529 / HD100)).